The chain runs to 517 residues: Pseudaminic acid cytidylyltransferase and UDP-2,4-diacetamido-2,4,6-trideoxy-beta-L-altropyranose hydrolase (517 aa).

Positions 1–208 are pseudaminic acid cytidylyltransferase; sequence MRAIAIVLAR…ELSPLEVQDI (208 aa). A UDP-2,4-diacetamido-2,4,6-trideoxy-beta-L-altropyranose hydrolase region spans residues 209-517; the sequence is AHFRRFRISQ…EGALREFLEI (309 aa). His244 functions as the Proton acceptor; for UDP-2,4-diacetamido-2,4,6-trideoxy-beta-L-altropyranose hydrolase activity in the catalytic mechanism.

This sequence in the N-terminal section; belongs to the CMP-NeuNAc synthase family. In the C-terminal section; belongs to the PseG family. Monomer. It depends on Mg(2+) as a cofactor.

The catalysed reaction is UDP-2,4-diacetamido-2,4,6-trideoxy-beta-L-altrose + H2O = 2,4-diacetamido-2,4,6-trideoxy-beta-L-altrose + UDP + H(+). It carries out the reaction pseudaminate + CTP = CMP-pseudaminate + diphosphate. Its function is as follows. Catalyzes the fourth and sixth steps in the biosynthesis of pseudaminic acid, a sialic-acid-like sugar that is used to modify flagellin. The C-terminus mediates the fourth step of the pathway and catalyzes the removal of UDP from C-1 of UDP-2,4-diacetamido-2,4,6-trideoxy-beta-L-altropyranose forming 2,4-diacetamido-2,4,6-trideoxy-beta-L-altropyranose. The N-terminal part mediates the last step of the pathway by mediating activation of pseudaminic acid with CMP by forming CMP-pseudaminic acid. The protein is Pseudaminic acid cytidylyltransferase and UDP-2,4-diacetamido-2,4,6-trideoxy-beta-L-altropyranose hydrolase of Helicobacter pylori (strain ATCC 700392 / 26695) (Campylobacter pylori).